A 680-amino-acid polypeptide reads, in one-letter code: MPDQSERATELRNLLNTAAHAYYVLDTPTMEDAVYDRLYQELLELEQNTPSLKTADSPTQRVGGAPAEGFTSVEHRIGLLSLDNAFNRDDLSAWNERLLRAIDRPLGSPLDLVSELKIDGNALALSYRNGVLERAATRGDGQRGEEITANVRTISAIPLRLRLDNPPEWVEIRGEAFIPDNTFAEINAERESRGEALFANPRNACAGTLRQLDPKVVAARRLDFFAYTLHLPTQEQPASQWDALTWLENAGFRVNPNRALCADLADINRFSDHWEQARHDLPYATDGVVVKLNNLVLQDEAGFTQKSPRWAIALKFPAEEAPSRLLRVVVQIGRTGVITPVAEFEPVALAGTSVSRATLHNADRIAELDLHLGDTIVVRKAGEIIPEVVRVLPELRPSSATPVQLPEHCPECGSNLVREGDEVATRCVNSSCPAILRGGLRHWVSKGALDVDGLGSKLIEQLVDQGLVRSIADLYRLDAALLGSLDRMGERSANNLIEALKLSRQRSWARQLYGLGIHHIGEVSAKAITAEFSDSNSLMEAACTAPERITAIYGIGTELAQSLQQWFSNPANQHLLDDLRSQGFRFALDDNDPGRLGAAASEQHLKGLTFVLTGTLPTLSRSEAKERIETCGGKVSGSVSKKTDYLVAGEEAGSKLTKATTLGIKILDEDRLQAMLKDSP.

NAD(+) contacts are provided by residues 32–36, 81–82, and Glu115; these read DAVYD and SL. The active-site N6-AMP-lysine intermediate is the Lys117. NAD(+) contacts are provided by Arg138, Glu175, Lys291, and Lys315. Cys409, Cys412, Cys427, and Cys432 together coordinate Zn(2+). One can recognise a BRCT domain in the interval 600–680; that stretch reads ASEQHLKGLT…RLQAMLKDSP (81 aa).

This sequence belongs to the NAD-dependent DNA ligase family. LigA subfamily. Mg(2+) is required as a cofactor. The cofactor is Mn(2+).

The catalysed reaction is NAD(+) + (deoxyribonucleotide)n-3'-hydroxyl + 5'-phospho-(deoxyribonucleotide)m = (deoxyribonucleotide)n+m + AMP + beta-nicotinamide D-nucleotide.. Functionally, DNA ligase that catalyzes the formation of phosphodiester linkages between 5'-phosphoryl and 3'-hydroxyl groups in double-stranded DNA using NAD as a coenzyme and as the energy source for the reaction. It is essential for DNA replication and repair of damaged DNA. The chain is DNA ligase from Synechococcus sp. (strain CC9902).